A 223-amino-acid polypeptide reads, in one-letter code: Deoxyribose-phosphate aldolase (223 aa).

The active-site Proton donor/acceptor is the Asp91. Lys153 serves as the catalytic Schiff-base intermediate with acetaldehyde. The active-site Proton donor/acceptor is the Lys183.

It belongs to the DeoC/FbaB aldolase family. DeoC type 1 subfamily.

It is found in the cytoplasm. It carries out the reaction 2-deoxy-D-ribose 5-phosphate = D-glyceraldehyde 3-phosphate + acetaldehyde. It participates in carbohydrate degradation; 2-deoxy-D-ribose 1-phosphate degradation; D-glyceraldehyde 3-phosphate and acetaldehyde from 2-deoxy-alpha-D-ribose 1-phosphate: step 2/2. Its function is as follows. Catalyzes a reversible aldol reaction between acetaldehyde and D-glyceraldehyde 3-phosphate to generate 2-deoxy-D-ribose 5-phosphate. In Mycoplasmopsis synoviae (strain 53) (Mycoplasma synoviae), this protein is Deoxyribose-phosphate aldolase.